Consider the following 145-residue polypeptide: Trafficking protein particle complex subunit 1 (145 aa).

The protein belongs to the TRAPP small subunits family. BET5 subfamily. Part of the multisubunit transport protein particle (TRAPP) complex. The heterodimer TRAPPC6B-TRAPPC3 interacts with TRAPPC1 likely providing a core for TRAPP complex formation.

The protein resides in the golgi apparatus. Its subcellular location is the cis-Golgi network. It localises to the endoplasmic reticulum. In terms of biological role, may play a role in vesicular transport from endoplasmic reticulum to Golgi. The polypeptide is Trafficking protein particle complex subunit 1 (Mus musculus (Mouse)).